The primary structure comprises 127 residues: Protein translocase subunit SecE (127 aa).

Over 1-19 the chain is Cytoplasmic; it reads MSANTEAQGSGRGLEAMKW. A helical transmembrane segment spans residues 20 to 32; sequence VVVVALLLVAIVG. Over 33-48 the chain is Periplasmic; the sequence is NYLYRDIMLPLRALAV. Residues 49–60 traverse the membrane as a helical segment; the sequence is VILIAAAGGVAL. Over 61-97 the chain is Cytoplasmic; it reads LTTKGKATVAFAREARTEVRKVIWPTRQETLHTTLIV. Residues 98–115 form a helical membrane-spanning segment; that stretch reads AAVTAVMSLILWGLDGIL. Residues 116 to 127 are Periplasmic-facing; the sequence is VRLVSFITGLRF.

The protein belongs to the SecE/SEC61-gamma family. As to quaternary structure, component of the Sec protein translocase complex. Heterotrimer consisting of SecY, SecE and SecG subunits. The heterotrimers can form oligomers, although 1 heterotrimer is thought to be able to translocate proteins. Interacts with the ribosome. Interacts with SecDF, and other proteins may be involved. Interacts with SecA.

The protein resides in the cell inner membrane. In terms of biological role, essential subunit of the Sec protein translocation channel SecYEG. Clamps together the 2 halves of SecY. May contact the channel plug during translocation. This chain is Protein translocase subunit SecE, found in Escherichia coli O157:H7.